A 389-amino-acid polypeptide reads, in one-letter code: Chorismate synthase (389 aa).

NADP(+) is bound by residues R41 and R47. Residues 129 to 131, 247 to 248, G291, 306 to 310, and R332 each bind FMN; these read RSS, NA, and KPIST.

The protein belongs to the chorismate synthase family. As to quaternary structure, homotetramer. The cofactor is FMNH2.

The enzyme catalyses 5-O-(1-carboxyvinyl)-3-phosphoshikimate = chorismate + phosphate. It participates in metabolic intermediate biosynthesis; chorismate biosynthesis; chorismate from D-erythrose 4-phosphate and phosphoenolpyruvate: step 7/7. Catalyzes the anti-1,4-elimination of the C-3 phosphate and the C-6 proR hydrogen from 5-enolpyruvylshikimate-3-phosphate (EPSP) to yield chorismate, which is the branch point compound that serves as the starting substrate for the three terminal pathways of aromatic amino acid biosynthesis. This reaction introduces a second double bond into the aromatic ring system. The polypeptide is Chorismate synthase (Rubrobacter xylanophilus (strain DSM 9941 / JCM 11954 / NBRC 16129 / PRD-1)).